Consider the following 528-residue polypeptide: Chaperonin GroEL, chloroplastic (528 aa).

Residues 29-32 (TLGP), 86-90 (DGTTT), Gly415, 481-483 (NAA), and Asp497 contribute to the ATP site.

This sequence belongs to the chaperonin (HSP60) family. Forms a cylinder of 14 subunits composed of two heptameric rings stacked back-to-back. Interacts with the co-chaperonin GroES.

Its subcellular location is the plastid. It localises to the chloroplast. The catalysed reaction is ATP + H2O + a folded polypeptide = ADP + phosphate + an unfolded polypeptide.. Together with its co-chaperonin GroES, plays an essential role in assisting protein folding. The GroEL-GroES system forms a nano-cage that allows encapsulation of the non-native substrate proteins and provides a physical environment optimized to promote and accelerate protein folding. The protein is Chaperonin GroEL, chloroplastic of Trieres chinensis (Marine centric diatom).